The chain runs to 372 residues: Flagellar P-ring protein (372 aa).

The signal sequence occupies residues 1–26; the sequence is MNLSSLSFRLLATLLGACVVVAPASA.

This sequence belongs to the FlgI family. As to quaternary structure, the basal body constitutes a major portion of the flagellar organelle and consists of four rings (L,P,S, and M) mounted on a central rod.

It is found in the periplasm. Its subcellular location is the bacterial flagellum basal body. Functionally, assembles around the rod to form the L-ring and probably protects the motor/basal body from shearing forces during rotation. The protein is Flagellar P-ring protein of Xanthomonas oryzae pv. oryzae (strain MAFF 311018).